The sequence spans 103 residues: Small ribosomal subunit protein uS10 (103 aa).

Belongs to the universal ribosomal protein uS10 family. In terms of assembly, part of the 30S ribosomal subunit.

Involved in the binding of tRNA to the ribosomes. This Neisseria gonorrhoeae (strain NCCP11945) protein is Small ribosomal subunit protein uS10.